The sequence spans 379 residues: MNKRITRPTWAEIDLSCLQFNFNQVKEILGSNVKIMSVVKADAYGHGVIPVAKTLVEAGTQRLAVAIPEEGVELREAGLSVPIQVLGEVLPSQYELLFKYDLIPTVGREETALSLNRLAAKYNVVKKVHIKVDTGMGRIGVRPREAVGFVKKVNSLSNIKIEGLMTHFASADERDKSYTYEQWDKFKQVLDGLNKLRIDIPIKHSSNSAAIIDFKKFGLDMVRPGIMLYGLKPSRDLINNIDLKPVLTWKTRIVYLKEVPPGTGISYGTTYVTNRKSKIATLPVGYADGYPRILSNQGQVLVRGRKAPIRGRVCMDQIMIDVTEIPDVRVGDEVVLIGEQGTQKISATDIAEKADTINYEIVCGISQRVPREYKNKIGG.

Lys-40 acts as the Proton acceptor; specific for D-alanine in catalysis. Lys-40 bears the N6-(pyridoxal phosphate)lysine mark. Arg-138 is a substrate binding site. Tyr-267 serves as the catalytic Proton acceptor; specific for L-alanine. Residue Met-315 coordinates substrate.

Belongs to the alanine racemase family. Pyridoxal 5'-phosphate is required as a cofactor.

It carries out the reaction L-alanine = D-alanine. It participates in amino-acid biosynthesis; D-alanine biosynthesis; D-alanine from L-alanine: step 1/1. In terms of biological role, catalyzes the interconversion of L-alanine and D-alanine. May also act on other amino acids. The sequence is that of Alanine racemase (alr) from Halothermothrix orenii (strain H 168 / OCM 544 / DSM 9562).